The primary structure comprises 426 residues: Glutamate-1-semialdehyde 2,1-aminomutase (426 aa).

The residue at position 268 (Lys268) is an N6-(pyridoxal phosphate)lysine.

It belongs to the class-III pyridoxal-phosphate-dependent aminotransferase family. HemL subfamily. Requires pyridoxal 5'-phosphate as cofactor.

Its subcellular location is the cytoplasm. It carries out the reaction (S)-4-amino-5-oxopentanoate = 5-aminolevulinate. It functions in the pathway porphyrin-containing compound metabolism; protoporphyrin-IX biosynthesis; 5-aminolevulinate from L-glutamyl-tRNA(Glu): step 2/2. The polypeptide is Glutamate-1-semialdehyde 2,1-aminomutase (Saccharolobus islandicus (strain Y.N.15.51 / Yellowstone #2) (Sulfolobus islandicus)).